A 363-amino-acid chain; its full sequence is Chalcone synthase B (363 aa).

Residue Cys170 is part of the active site.

The protein belongs to the thiolase-like superfamily. Chalcone/stilbene synthases family.

The enzyme catalyses (E)-4-coumaroyl-CoA + 3 malonyl-CoA + 3 H(+) = 2',4,4',6'-tetrahydroxychalcone + 3 CO2 + 4 CoA. The protein operates within secondary metabolite biosynthesis; flavonoid biosynthesis. Its function is as follows. The primary product of this enzyme is 4,2',4',6'-tetrahydroxychalcone (also termed naringenin-chalcone or chalcone) which can under specific conditions spontaneously isomerize into naringenin. This chain is Chalcone synthase B (CHSB), found in Ipomoea nil (Japanese morning glory).